Reading from the N-terminus, the 709-residue chain is Homeobox-leucine zipper protein TF1 (709 aa).

A DNA-binding region (homeobox) is located at residues 66-125 (RKRRLQRLTGKQSEVLEGFFSICGHPDDGQKRHLSETTGLGLDQVKFWFQNKRTQVKTMC). Residues 166–187 (NQLAVEMERLMGQSEWLQQEIA) adopt a coiled-coil conformation. In terms of domain architecture, START spans 212 to 441 (GQHDQQMIAE…MARQSARMRD (230 aa)).

This sequence belongs to the HD-ZIP homeobox family. Class IV subfamily.

Its subcellular location is the nucleus. Probable transcription factor. The chain is Homeobox-leucine zipper protein TF1 (TF1) from Oryza sativa subsp. japonica (Rice).